The chain runs to 1053 residues: Carbamoyl phosphate synthase large chain (1053 aa).

Residues 1–397 (MPKNTSLKKV…GFKKALRSLD (397 aa)) are carboxyphosphate synthetic domain. ATP contacts are provided by Arg-127, Arg-167, Gly-173, Gly-174, Glu-206, Val-208, Glu-213, Gly-239, Val-240, His-241, Gln-282, and Glu-294. Residues 131 to 323 (KKLMLEIGEP…IARVAAKVAI (193 aa)) form the ATP-grasp 1 domain. Residues Gln-282, Glu-294, and Asn-296 each coordinate Mg(2+). 3 residues coordinate Mn(2+): Gln-282, Glu-294, and Asn-296. The segment at 398–530 (TDIYRHTDLN…YSTWEQECEL (133 aa)) is oligomerization domain. Residues 531 to 919 (TQSDRKKILI…YKASQAADNT (389 aa)) are carbamoyl phosphate synthetic domain. In terms of domain architecture, ATP-grasp 2 spans 661-852 (SVLLDQNNIP…LAKIAAKLML (192 aa)). The ATP site is built by Arg-697, Arg-736, Leu-738, Glu-743, Gly-768, Val-769, His-770, Ser-771, Gln-811, and Glu-823. The Mg(2+) site is built by Gln-811, Glu-823, and Asn-825. Gln-811, Glu-823, and Asn-825 together coordinate Mn(2+). The region spanning 918 to 1053 (NTIPLKGNVF…TVEPLSHYHS (136 aa)) is the MGS-like domain. Residues 920-1053 (IPLKGNVFIS…TVEPLSHYHS (134 aa)) are allosteric domain.

The protein belongs to the CarB family. In terms of assembly, composed of two chains; the small (or glutamine) chain promotes the hydrolysis of glutamine to ammonia, which is used by the large (or ammonia) chain to synthesize carbamoyl phosphate. Tetramer of heterodimers (alpha,beta)4. Mg(2+) is required as a cofactor. The cofactor is Mn(2+).

The catalysed reaction is hydrogencarbonate + L-glutamine + 2 ATP + H2O = carbamoyl phosphate + L-glutamate + 2 ADP + phosphate + 2 H(+). It carries out the reaction hydrogencarbonate + NH4(+) + 2 ATP = carbamoyl phosphate + 2 ADP + phosphate + 2 H(+). The protein operates within amino-acid biosynthesis; L-arginine biosynthesis; carbamoyl phosphate from bicarbonate: step 1/1. It participates in pyrimidine metabolism; UMP biosynthesis via de novo pathway; (S)-dihydroorotate from bicarbonate: step 1/3. Its function is as follows. Large subunit of the glutamine-dependent carbamoyl phosphate synthetase (CPSase). CPSase catalyzes the formation of carbamoyl phosphate from the ammonia moiety of glutamine, carbonate, and phosphate donated by ATP, constituting the first step of 2 biosynthetic pathways, one leading to arginine and/or urea and the other to pyrimidine nucleotides. The large subunit (synthetase) binds the substrates ammonia (free or transferred from glutamine from the small subunit), hydrogencarbonate and ATP and carries out an ATP-coupled ligase reaction, activating hydrogencarbonate by forming carboxy phosphate which reacts with ammonia to form carbamoyl phosphate. This Methanocorpusculum labreanum (strain ATCC 43576 / DSM 4855 / Z) protein is Carbamoyl phosphate synthase large chain.